Here is a 779-residue protein sequence, read N- to C-terminus: Mediator of RNA polymerase II transcription subunit 15 (779 aa).

2 stretches are compositionally biased toward polar residues: residues 70-90 (NKNQQNPAGGSQDGGNPNQQG) and 98-108 (ALQTLATQGTR). Disordered stretches follow at residues 70 to 131 (NKNQ…GGNA), 209 to 407 (NPMQ…VPIG), 437 to 512 (FLRQ…NPQE), and 629 to 649 (PAKQPRLAIDEPSTSGSTGSQ). The span at 114–130 (GQMGPGGPMGNQMGGGN) shows a compositional bias: gly residues. Low complexity-rich tracts occupy residues 209-232 (NPMQMGVSGMPQGAGQQQPQQPQG) and 240-270 (PNQMNPMGGMGMQVNPGGHMNQNAINQQMNQ). A compositionally biased stretch (gly residues) spans 274-284 (SSGGNQMGNLG). 3 stretches are compositionally biased toward low complexity: residues 285–295 (GNSPMNPGNMG), 304–329 (QQMPPGMNPNQQQLGMAGGQMNQMNQ), and 339–350 (GPVQQQQQPGQV). The span at 351-361 (GMAGMGPGGPG) shows a compositional bias: gly residues. 3 stretches are compositionally biased toward low complexity: residues 362–383 (NLQQQNNPQQQSQGGPNAAPGQ), 393–402 (NMQAMGNQGN), and 451–468 (GPGSIGPQSHPGQMIPSP). Polar residues-rich tracts occupy residues 477-500 (QVSSNIPAPRNIGQSPGQSLNTPG) and 640-649 (PSTSGSTGSQ).

This sequence belongs to the Mediator complex subunit 15 family. Component of the Mediator complex.

It is found in the nucleus. In terms of biological role, component of the Mediator complex, a coactivator involved in the regulated transcription of nearly all RNA polymerase II-dependent genes. Mediator functions as a bridge to convey information from gene-specific regulatory proteins to the basal RNA polymerase II transcription machinery. Mediator is recruited to promoters by direct interactions with regulatory proteins and serves as a scaffold for the assembly of a functional preinitiation complex with RNA polymerase II and the general transcription factors. The polypeptide is Mediator of RNA polymerase II transcription subunit 15 (MED15) (Aedes aegypti (Yellowfever mosquito)).